The following is a 217-amino-acid chain: Uridine kinase (217 aa).

17 to 24 contributes to the ATP binding site; the sequence is GASASGKS.

It belongs to the uridine kinase family.

The protein resides in the cytoplasm. The enzyme catalyses uridine + ATP = UMP + ADP + H(+). It carries out the reaction cytidine + ATP = CMP + ADP + H(+). It participates in pyrimidine metabolism; CTP biosynthesis via salvage pathway; CTP from cytidine: step 1/3. The protein operates within pyrimidine metabolism; UMP biosynthesis via salvage pathway; UMP from uridine: step 1/1. This chain is Uridine kinase, found in Haemophilus ducreyi (strain 35000HP / ATCC 700724).